A 676-amino-acid chain; its full sequence is Hemin receptor (676 aa).

Positions 1–28 (MLRSTSDRFRWSSLSLAIACTLPLATQA) are cleaved as a signal peptide. Positions 44–51 (DTMVVTAT) match the TonB box motif. One can recognise a TBDR plug domain in the interval 56-167 (SSFEAPMMVT…LGGVIAYETV (112 aa)). A TBDR beta-barrel domain is found at 178–676 (NSGYRVYSSA…NVKFFVSYQW (499 aa)). The short motif at 659-676 (QGIPQDGRNVKFFVSYQW) is the TonB C-terminal box element.

It belongs to the TonB-dependent receptor family.

The protein localises to the cell outer membrane. Functionally, this protein is involved in the initial step of iron uptake by binding hemin, an iron chelatin siderophore that allows the bacteria to extract iron from the environment. This Yersinia pestis protein is Hemin receptor (hmuR).